Consider the following 315-residue polypeptide: tRNA wybutosine-synthesizing protein 5 (315 aa).

A JmjC domain is found at 102-267 (DEKYYLRSLG…YDKTDTYGNK (166 aa)). Y106 serves as a coordination point for 2-oxoglutarate. H160 and D162 together coordinate Fe cation. N166 and K175 together coordinate 2-oxoglutarate. Residue H235 coordinates Fe cation.

The protein belongs to the TYW5 family. As to quaternary structure, homodimer. The cofactor is Fe(2+).

The catalysed reaction is 7-[(3S)-3-amino-3-carboxypropyl]wyosine(37) in tRNA(Phe) + 2-oxoglutarate + O2 = 7-(2-hydroxy-3-amino-3-carboxypropyl)wyosine(37) in tRNA(Phe) + succinate + CO2. The protein operates within tRNA modification; wybutosine-tRNA(Phe) biosynthesis. TRNA hydroxylase that acts as a component of the wybutosine biosynthesis pathway. Wybutosine is a hyper modified guanosine with a tricyclic base found at the 3'-position adjacent to the anticodon of eukaryotic phenylalanine tRNA. Catalyzes the hydroxylation of 7-(a-amino-a-carboxypropyl)wyosine (yW-72) into undermodified hydroxywybutosine (OHyW*). OHyW* being further transformed into hydroxywybutosine (OHyW) by LCMT2/TYW4. OHyW is a derivative of wybutosine found in higher eukaryotes. This chain is tRNA wybutosine-synthesizing protein 5 (TYW5), found in Homo sapiens (Human).